Consider the following 397-residue polypeptide: Serpin B10 (397 aa).

A disordered region spans residues 62–85 (RDQGVKSSPESEKKRKMEFNSSNS). Residues 70-79 (PESEKKRKME) are compositionally biased toward basic and acidic residues. Residues 74 to 77 (KKRK) carry the Nuclear localization signal motif.

It belongs to the serpin family. Ov-serpin subfamily.

The protein resides in the nucleus. The protein localises to the cytoplasm. Functionally, protease inhibitor that may play a role in the regulation of protease activities during hematopoiesis and apoptosis induced by TNF. May regulate protease activities in the cytoplasm and in the nucleus. This Papio anubis (Olive baboon) protein is Serpin B10 (SERPINB10).